The chain runs to 313 residues: Formate-nitrite transporter (313 aa).

At 1–46 (MTKGSKYTIDPISVKTACTSEESYIRCVEYGKGKAHYPNLSLLAKA) the chain is on the cytoplasmic side. A helical transmembrane segment spans residues 47 to 67 (ILAGVFVGVCAHASGIAGGHF). At 68 to 77 (YYHKLREHVG) the chain is on the extracellular side. Residues 78 to 98 (ISMSAFVYGFTFPIAFLCIIA) form a helical membrane-spanning segment. Topologically, residues 99-127 (TGSDLFTGNTLAVTTALLQRKVTLLEYLR) are cytoplasmic. A helical transmembrane segment spans residues 128-148 (VMSISLFGNYVGAVSFAFFVS). The Extracellular segment spans residues 149 to 184 (HLSGAFKKHEEIGKNHIFQFLNDIAEKKVSHTFVQC). A helical transmembrane segment spans residues 185 to 205 (VCLAIGCNIFVCLAVYFVLTI). Residues 206–210 (KDGSG) lie on the Cytoplasmic side of the membrane. A helical membrane pass occupies residues 211–231 (MVFSVFFAVYAFAIAGYEHII). Topologically, residues 232–256 (ANMYTLNLALMIEANVDWTKVYVDN) are extracellular. Residues 257–277 (LLPTLIGNYIAGAIVLACPLF) traverse the membrane as a helical segment. Residues 278–313 (YIYRHSYSDYEKTRGDGGNSGLKSLSIEMQNGSSGR) lie on the Cytoplasmic side of the membrane. The disordered stretch occupies residues 290–313 (TRGDGGNSGLKSLSIEMQNGSSGR). Over residues 298–313 (GLKSLSIEMQNGSSGR) the composition is skewed to polar residues.

Belongs to the FNT transporter (TC 1.A.16) family. As to quaternary structure, homopentamer.

Its subcellular location is the cell membrane. The protein localises to the vacuole membrane. It carries out the reaction (S)-lactate(in) + H(+)(in) = (S)-lactate(out) + H(+)(out). The catalysed reaction is formate(in) + H(+)(in) = formate(out) + H(+)(out). It catalyses the reaction pyruvate(out) + H(+)(out) = pyruvate(in) + H(+)(in). The enzyme catalyses acetate(out) + H(+)(out) = acetate(in) + H(+)(in). Its activity is regulated as follows. Inhibited by the Malaria Box compound MMV007839 and its derivatives BH296 and BH267.meta. Functionally, monocarboxylate-proton symporter that mediates the efflux of the waste product lactate in the intraerythrocytic parasites; active in acidic-to-neutral pH range. Transports L-lactate. In Plasmodium vivax, this protein is Formate-nitrite transporter.